A 378-amino-acid chain; its full sequence is Zinc finger protein DPF3 (378 aa).

Residue lysine 99 forms a Glycyl lysine isopeptide (Lys-Gly) (interchain with G-Cter in SUMO2) linkage. Positions 146–193 are disordered; sequence LENDENVEEGNEEEDLEEDVPKRKNRTRGRARGSAGGRRRHDAASQED. The segment covering 148-163 has biased composition (acidic residues); it reads NDENVEEGNEEEDLEE. Basic residues predominate over residues 168-186; sequence RKNRTRGRARGSAGGRRRH. The C2H2-type zinc-finger motif lies at 198–221; the sequence is YVCDICGKRYKNRPGLSYHYAHTH. Residues 225 to 254 are disordered; sequence EEGDEAQDQETRSPPNHRNENHRPQKGPDG. PHD-type zinc fingers lie at residues 259–319 and 316–366; these read NNYC…CKSC and CKSC…CWEL. The tract at residues 317-332 is interaction with HDGFL2; sequence KSCILCGTSENDDQLL. Glycine 323 is subject to Phosphoserine.

This sequence belongs to the requiem/DPF family. As to quaternary structure, component of the BAF complex, which includes at least actin (ACTB), ARID1A, ARID1B/BAF250, SMARCA2, SMARCA4/BRG1/BAF190A, ACTL6A/BAF53, ACTL6B/BAF53B, SMARCE1/BAF57, SMARCC1/BAF155, SMARCC2/BAF170, SMARCB1/SNF5/INI1, and one or more of SMARCD1/BAF60A, SMARCD2/BAF60B, or SMARCD3/BAF60C. In muscle cells, the BAF complex also contains DPF3. Interacts with acetylated histones H3 and H4. Component of neuron-specific chromatin remodeling complex (nBAF complex) composed of at least, ARID1A/BAF250A or ARID1B/BAF250B, SMARCD1/BAF60A, SMARCD3/BAF60C, SMARCA2/BRM/BAF190B, SMARCA4/BRG1/BAF190A, SMARCB1/BAF47, SMARCC1/BAF155, SMARCE1/BAF57, SMARCC2/BAF170, DPF1/BAF45B, DPF3/BAF45C, ACTL6B/BAF53B and actin. In terms of assembly, interacts with HDGFL2. Interacts with SMARCA4/BRG1/BAF190A, SMARCC1/BAF155 and SMARCD1/BAF60A. As to expression, expressed in the heart and somites. Expressed in cerebellum and spinal cord, but not in cerebral cortex. Expressed specifically in post-mitotic neurons (at protein level).

The protein localises to the nucleus. Its function is as follows. Muscle-specific component of the BAF complex, a multiprotein complex involved in transcriptional activation and repression of select genes by chromatin remodeling (alteration of DNA-nucleosome topology). Specifically binds acetylated lysines on histone 3 and 4 (H3K14ac, H3K9ac, H4K5ac, H4K8ac, H4K12ac, H4K16ac). In the complex, it acts as a tissue-specific anchor between histone acetylations and methylations and chromatin remodeling. It thereby probably plays an essential role in heart and skeletal muscle development. Belongs to the neuron-specific chromatin remodeling complex (nBAF complex). During neural development a switch from a stem/progenitor to a post-mitotic chromatin remodeling mechanism occurs as neurons exit the cell cycle and become committed to their adult state. The transition from proliferating neural stem/progenitor cells to post-mitotic neurons requires a switch in subunit composition of the npBAF and nBAF complexes. As neural progenitors exit mitosis and differentiate into neurons, npBAF complexes which contain ACTL6A/BAF53A and PHF10/BAF45A, are exchanged for homologous alternative ACTL6B/BAF53B and DPF1/BAF45B or DPF3/BAF45C subunits in neuron-specific complexes (nBAF). The npBAF complex is essential for the self-renewal/proliferative capacity of the multipotent neural stem cells. The nBAF complex along with CREST plays a role regulating the activity of genes essential for dendrite growth. In terms of biological role, acts as a regulator of myogenesis in cooperation with HDGFL2. Mediates the interaction of HDGFL2 with the BAF complex. HDGFL2-DPF3a activate myogenic genes by increasing chromatin accessibility through recruitment of SMARCA4/BRG1/BAF190A (ATPase subunit of the BAF complex) to myogenic gene promoters. This Mus musculus (Mouse) protein is Zinc finger protein DPF3 (Dpf3).